Here is a 414-residue protein sequence, read N- to C-terminus: UDP-N-acetylmuramoylalanine--D-glutamate ligase (414 aa).

Residue 104 to 110 (GSNGKST) coordinates ATP.

This sequence belongs to the MurCDEF family.

The protein resides in the cytoplasm. The catalysed reaction is UDP-N-acetyl-alpha-D-muramoyl-L-alanine + D-glutamate + ATP = UDP-N-acetyl-alpha-D-muramoyl-L-alanyl-D-glutamate + ADP + phosphate + H(+). Its pathway is cell wall biogenesis; peptidoglycan biosynthesis. Its function is as follows. Cell wall formation. Catalyzes the addition of glutamate to the nucleotide precursor UDP-N-acetylmuramoyl-L-alanine (UMA). The polypeptide is UDP-N-acetylmuramoylalanine--D-glutamate ligase (Francisella philomiragia subsp. philomiragia (strain ATCC 25017 / CCUG 19701 / FSC 153 / O#319-036)).